The following is a 129-amino-acid chain: Fluoride-specific ion channel FluC (129 aa).

Transmembrane regions (helical) follow at residues 8–28 (ILLVGVGGFLGSVARYLVALW), 34–54 (AVFPFATLTVNLLGSFLIGFI), 70–90 (IFLVTGFCGGFTTFSSYMIEH), and 102–122 (AALYLFGSLIGGFIALYLGII). Residues glycine 78 and threonine 81 each coordinate Na(+).

It belongs to the fluoride channel Fluc/FEX (TC 1.A.43) family.

The protein localises to the cell inner membrane. It catalyses the reaction fluoride(in) = fluoride(out). With respect to regulation, na(+) is not transported, but it plays an essential structural role and its presence is essential for fluoride channel function. Its function is as follows. Fluoride-specific ion channel. Important for reducing fluoride concentration in the cell, thus reducing its toxicity. The sequence is that of Fluoride-specific ion channel FluC from Chlorobium chlorochromatii (strain CaD3).